A 1196-amino-acid polypeptide reads, in one-letter code: Contactin rig-6 (1196 aa).

Positions 1-19 are cleaved as a signal peptide; the sequence is MMMLIRCISIFLLFGFVNA. Asparagine 100 and asparagine 195 each carry an N-linked (GlcNAc...) asparagine glycan. Ig-like C2-type domains follow at residues 144–225 and 232–319; these read PQIS…ARNS and PPIL…CSLS. Disulfide bonds link cysteine 169-cysteine 220 and cysteine 263-cysteine 316. The N-linked (GlcNAc...) asparagine glycan is linked to asparagine 343. Ig-like C2-type domains lie at 355 to 438, 441 to 533, 539 to 626, and 631 to 730; these read PQIF…VKLR, PSIL…ALLT, PVFP…VQLI, and PSIK…EFVT. Cysteine 372 and cysteine 420 are disulfide-bonded. An N-linked (GlcNAc...) asparagine glycan is attached at asparagine 457. 2 cysteine pairs are disulfide-bonded: cysteine 462–cysteine 517 and cysteine 562–cysteine 610. An N-linked (GlcNAc...) asparagine glycan is attached at asparagine 644. A disulfide bridge connects residues cysteine 653 and cysteine 718. Fibronectin type-III domains are found at residues 736 to 844, 849 to 961, 963 to 1057, and 1064 to 1168; these read SPIA…TAPG, TIDN…SHGE, KKVS…TKQH, and LIGK…LGSP. N-linked (GlcNAc...) asparagine glycosylation is found at asparagine 895, asparagine 925, asparagine 945, asparagine 974, asparagine 979, asparagine 986, asparagine 1002, and asparagine 1092. Residues 1174–1194 traverse the membrane as a helical segment; sequence TTGSSDVPIPSLLLLLLLLLW. The GPI-anchor amidated serine moiety is linked to residue serine 1177. A propeptide spans 1178–1196 (removed in mature form); it reads SDVPIPSLLLLLLLLLWRL.

It belongs to the immunoglobulin superfamily. Contactin family. In terms of assembly, interacts with sax-7; the interaction establishes synaptic connections between neurons. In terms of tissue distribution, expressed in neurons including the I1 and I3 pharyngeal interneurons, NSM and VNC motor neurons, HSN and CAN neurons, the ALM and PLM touch receptor neurons and other unidentified head neurons. Expressed in AVG interneurons. Also expressed in somatic muscles, the excretory canal, the excretory cell and the hypodermis.

It localises to the cell membrane. The protein localises to the perikaryon. Its subcellular location is the cell projection. It is found in the axon. The protein resides in the synapse. It localises to the cytoplasm. Functionally, probable cell adhesion protein involved in patterning of the nervous system, playing a role in ALM and PLM touch receptor axon growth and VNC axon navigation. By associating with the transmembrane protein sax-7, mediates axonal interactions to establish synaptic connections between the AVG interneuron and the two PHC sensory neurons. Also required for non-neuronal cell migration in the excretory canal, regulating excretory canal elongation and excretory cell morphogenesis. Plays a role in regulating male mating behavior. The sequence is that of Contactin rig-6 from Caenorhabditis elegans.